The primary structure comprises 326 residues: Probable cell division protein WhiA (326 aa).

Residues Ser-275 to Arg-308 constitute a DNA-binding region (H-T-H motif).

It belongs to the WhiA family.

Functionally, involved in cell division and chromosome segregation. This is Probable cell division protein WhiA from Salinispora arenicola (strain CNS-205).